Here is a 92-residue protein sequence, read N- to C-terminus: UPF0223 protein SSA_0938 (92 aa).

The protein belongs to the UPF0223 family.

This chain is UPF0223 protein SSA_0938, found in Streptococcus sanguinis (strain SK36).